The following is a 134-amino-acid chain: Small ribosomal subunit protein uS9 (134 aa).

The segment at 113–134 is disordered; sequence REVERKKYGLKKARRAPQFSKR. Residues 120–134 show a composition bias toward basic residues; it reads YGLKKARRAPQFSKR.

This sequence belongs to the universal ribosomal protein uS9 family.

This Thermotoga petrophila (strain ATCC BAA-488 / DSM 13995 / JCM 10881 / RKU-1) protein is Small ribosomal subunit protein uS9.